Here is a 428-residue protein sequence, read N- to C-terminus: MAGAASALFLLDIKGRVLVWRDYRGDVSAAQAERFFTKLIEKEGDSQSNDPVAYDNGVTYMFVQHSNVYLMIASRQNCNAASLLFFLHRVVDVFKHYFEELEEESLRDNFVVVYELLDEMMDFGYPQYTEARILSEFIKTDAYRMEVTQRPPMAVTNAVSWRSEGIQYKKNEVFLDVIENVNILVNSNGQIVRSDVVGALKMRTYLTGMPECKLGLNDRVLLEAQGRATKGKAIDLEDIKFHQCVRLARFENDRTISFIPPDGAFDLMTYRLSTQVKPLIWVEAQIESHSRSRVEMLIKARSQFKERSTATNVEIELPVPTDASNPTVRTSLGSASYAPEKDALVWKIKSFPGNKEYMLRAEFHLPSITAEEATPERKAPIRVKFEIPYFTVSGIQVRYLKIIEKSGYQALPWVRYITMAGEYELRLV.

An MHD domain is found at Lys-170–Arg-426.

This sequence belongs to the adaptor complexes medium subunit family. Adaptor protein complex 1 (AP-1) is a heterotetramer composed of two large adaptins (gamma-type subunit and beta-type subunit), a medium adaptin (mu-type subunit) and a small adaptin (sigma-type subunit). As to expression, ubiquitous.

The protein localises to the golgi apparatus. It localises to the trans-Golgi network membrane. It is found in the early endosome membrane. Its subcellular location is the cytoplasmic vesicle. The protein resides in the clathrin-coated vesicle membrane. Its function is as follows. Subunit of clathrin-associated adaptor protein complex 1 that plays a role in protein sorting at the trans-Golgi network and early endosomes (TGN/EE). The AP complexes mediate the recruitment of clathrin to membranes and the recognition of sorting signals within the cytosolic tails of transmembrane cargo molecules. Required for KNOLLE localization at the cell plate to mediate cytokinesis. Functions redundantly with AP1M1 in multiple post-Golgi trafficking pathways leading from the TGN to the vacuole, the plasma membrane, and the cell-division plane. In Arabidopsis thaliana (Mouse-ear cress), this protein is AP-1 complex subunit mu-2 (AP1M2).